The sequence spans 341 residues: THO complex subunit 6 homolog (341 aa).

7 WD repeats span residues 22 to 61 (RLHM…SSEA), 74 to 112 (AHDG…GCKE), 124 to 165 (LEVP…RALR), 166 to 205 (GHTD…EVQT), 215 to 254 (SRPH…PTTV), 256 to 293 (PIRA…KAQV), and 295 to 339 (GSSP…AFSL). Serine 180 is modified (phosphoserine).

The protein belongs to the WD repeat THOC6 family. In terms of assembly, component of the THO subcomplex, which is composed of THOC1, THOC2, THOC3, THOC5, THOC6 and THOC7. The THO subcomplex interacts with DDX39B to form the THO-DDX39B complex which multimerizes into a 28-subunit tetrameric assembly. Component of the transcription/export (TREX) complex at least composed of ALYREF/THOC4, DDX39B, SARNP/CIP29, CHTOP and the THO subcomplex; in the complex interacts with THOC5; together with THOC5 and THOC7, plays a key structural role in the oligomerization of the THO-DDX39B complex. TREX seems to have a dynamic structure involving ATP-dependent remodeling.

Its subcellular location is the nucleus. The protein resides in the nucleus speckle. Component of the THO subcomplex of the TREX complex which is thought to couple mRNA transcription, processing and nuclear export, and which specifically associates with spliced mRNA and not with unspliced pre-mRNA. Plays a key structural role in the oligomerization of the THO-DDX39B complex. TREX is recruited to spliced mRNAs by a transcription-independent mechanism, binds to mRNA upstream of the exon-junction complex (EJC) and is recruited in a splicing- and cap-dependent manner to a region near the 5' end of the mRNA where it functions in mRNA export to the cytoplasm via the TAP/NXF1 pathway. Plays a role in apoptosis negative control involved in brain development. This chain is THO complex subunit 6 homolog (Thoc6), found in Mus musculus (Mouse).